The primary structure comprises 342 residues: RNA 3'-terminal phosphate cyclase (342 aa).

ATP contacts are provided by residues Gln-100 and 283–287 (FLGDQ). The active-site Tele-AMP-histidine intermediate is the His-307.

Belongs to the RNA 3'-terminal cyclase family. Type 1 subfamily.

The protein localises to the cytoplasm. It catalyses the reaction a 3'-end 3'-phospho-ribonucleotide-RNA + ATP = a 3'-end 2',3'-cyclophospho-ribonucleotide-RNA + AMP + diphosphate. Functionally, catalyzes the conversion of 3'-phosphate to a 2',3'-cyclic phosphodiester at the end of RNA. The mechanism of action of the enzyme occurs in 3 steps: (A) adenylation of the enzyme by ATP; (B) transfer of adenylate to an RNA-N3'P to produce RNA-N3'PP5'A; (C) and attack of the adjacent 2'-hydroxyl on the 3'-phosphorus in the diester linkage to produce the cyclic end product. The biological role of this enzyme is unknown but it is likely to function in some aspects of cellular RNA processing. This Pyrococcus abyssi (strain GE5 / Orsay) protein is RNA 3'-terminal phosphate cyclase (rtcA).